Reading from the N-terminus, the 42-residue chain is Iota-conotoxin-like R11.1 (42 aa).

4 cysteine pairs are disulfide-bonded: cysteine 5–cysteine 19, cysteine 12–cysteine 22, cysteine 18–cysteine 27, and cysteine 21–cysteine 36.

It belongs to the conotoxin I1 superfamily. Expressed by the venom duct.

The protein localises to the secreted. Its function is as follows. Iota-conotoxins bind to voltage-gated sodium channels (Nav) and act as agonists by shifting the voltage-dependence of activation to more hyperpolarized levels. Produces general excitatory symptoms. This Conus radiatus (Rayed cone) protein is Iota-conotoxin-like R11.1.